The following is a 91-amino-acid chain: Acylphosphatase (91 aa).

The region spanning 4-91 (RAIVTIKGLV…GEFDDFDVRY (88 aa)) is the Acylphosphatase-like domain. Residues arginine 19 and asparagine 37 contribute to the active site.

It belongs to the acylphosphatase family.

It catalyses the reaction an acyl phosphate + H2O = a carboxylate + phosphate + H(+). The sequence is that of Acylphosphatase (acyP) from Geobacter sulfurreducens (strain ATCC 51573 / DSM 12127 / PCA).